Reading from the N-terminus, the 93-residue chain is Putative transmembrane protein ORF25 (93 aa).

The next 3 membrane-spanning stretches (helical) occupy residues M1 to A21, F22 to I42, and L60 to L80.

It is found in the host membrane. This is Putative transmembrane protein ORF25 from His1 virus (isolate Australia/Victoria) (His1V).